A 367-amino-acid polypeptide reads, in one-letter code: GTPase Obg (367 aa).

An Obg domain is found at 1-158; the sequence is MFIDNVELTV…VQIRLELKLI (158 aa). The OBG-type G domain occupies 159–358; the sequence is ADVGLVGFPN…LKYALYDLVK (200 aa). GTP-binding positions include 165–172, 190–194, 212–215, 280–283, and 339–341; these read GFPNVGKS, FTTLT, DIPG, TKID, and SAV. The Mg(2+) site is built by Ser172 and Thr192.

It belongs to the TRAFAC class OBG-HflX-like GTPase superfamily. OBG GTPase family. Monomer. The cofactor is Mg(2+).

Its subcellular location is the cytoplasm. Its function is as follows. An essential GTPase which binds GTP, GDP and possibly (p)ppGpp with moderate affinity, with high nucleotide exchange rates and a fairly low GTP hydrolysis rate. Plays a role in control of the cell cycle, stress response, ribosome biogenesis and in those bacteria that undergo differentiation, in morphogenesis control. The sequence is that of GTPase Obg from Nitratiruptor sp. (strain SB155-2).